Consider the following 1017-residue polypeptide: Probable DNA ligase (1017 aa).

A unknown region spans residues 1–363; sequence MPWDVKFSHG…PACATPLHAP (363 aa). The tract at residues 326-352 is disordered; it reads GIRSSPPQVRAGDATPSSRSSGDAGVA. The DNA ligase stretch occupies residues 364–1017; sequence DSFARFVAAA…GARPPPAASD (654 aa). E667 contributes to the ATP binding site. The active-site N6-AMP-lysine intermediate is the K669. Residues R674, R689, E717, R860, and K866 each contribute to the ATP site.

In the C-terminal section; belongs to the ATP-dependent DNA ligase family. Mg(2+) serves as cofactor.

The enzyme catalyses ATP + (deoxyribonucleotide)n-3'-hydroxyl + 5'-phospho-(deoxyribonucleotide)m = (deoxyribonucleotide)n+m + AMP + diphosphate.. Functionally, DNA ligase that seals nicks in double-stranded DNA during DNA replication, DNA recombination and DNA repair. In Opitutus terrae (strain DSM 11246 / JCM 15787 / PB90-1), this protein is Probable DNA ligase (lig).